Consider the following 162-residue polypeptide: NADH-quinone oxidoreductase subunit I (162 aa).

2 4Fe-4S ferredoxin-type domains span residues 53–83 (LRRYPNGEERCIACKLCEAVCPALAITIESD) and 93–122 (TRYDIDLTKCIFCGFCEESCPVDSIVETHI). Residues C63, C66, C69, C73, C102, C105, C108, and C112 each contribute to the [4Fe-4S] cluster site.

The protein belongs to the complex I 23 kDa subunit family. NDH-1 is composed of 14 different subunits. Subunits NuoA, H, J, K, L, M, N constitute the membrane sector of the complex. [4Fe-4S] cluster serves as cofactor.

It is found in the cell inner membrane. It carries out the reaction a quinone + NADH + 5 H(+)(in) = a quinol + NAD(+) + 4 H(+)(out). In terms of biological role, NDH-1 shuttles electrons from NADH, via FMN and iron-sulfur (Fe-S) centers, to quinones in the respiratory chain. The immediate electron acceptor for the enzyme in this species is believed to be ubiquinone. Couples the redox reaction to proton translocation (for every two electrons transferred, four hydrogen ions are translocated across the cytoplasmic membrane), and thus conserves the redox energy in a proton gradient. The chain is NADH-quinone oxidoreductase subunit I from Bordetella avium (strain 197N).